Consider the following 127-residue polypeptide: Evasin-4 (127 aa).

The first 23 residues, 1–23, serve as a signal peptide directing secretion; sequence MAFKYWFVFAAVLYARQWLSTKC. 4 disulfide bridges follow: Cys50/Cys69, Cys65/Cys112, Cys86/Cys117, and Cys107/Cys126. 7 N-linked (GlcNAc...) asparagine glycosylation sites follow: Asn54, Asn64, Asn70, Asn77, Asn83, Asn106, and Asn114.

The protein belongs to the evasin C8 family. As to quaternary structure, monomer.

It localises to the secreted. Its function is as follows. Salivary chemokine-binding protein which has chemokine-neutralizing activity and binds to host chemokines CCL1, CCL3, CCL5, CCL7, CCL8, CCL11, CCL14, CCL15, CCL16, CCL17, CCL18, CCL19, CCL21, CCL22, CCL23, CCL24, CCL25 and CCL26 with nanomolar affinity. Binds to CCL3 and CCL5 with 1:1 stoichiometry. Although binding to CCL25 is observed, does not inhibit CCL25-induced chemotaxis. Has been shown to reduce cardiac injury and inflammation in mice through its anti-CCL5 activity. The protein is Evasin-4 of Rhipicephalus sanguineus (Brown dog tick).